The primary structure comprises 580 residues: Arrestin domain-containing protein A (580 aa).

N-linked (GlcNAc...) asparagine glycans are attached at residues Asn27, Asn33, and Asn60. The tract at residues 31-54 (NVNTTSSHHHHHSNSGNAEVSFNG) is disordered. Disordered stretches follow at residues 67-86 (ETHS…EISI) and 95-114 (MTMS…HKES). Residues 118-138 (NLSLGGIVGAVVGAVTGGVMI) form a helical membrane-spanning segment. Residues Asn149, Asn341, and Asn342 are each glycosylated (N-linked (GlcNAc...) asparagine). The segment at 468-528 (DEHATACRKC…VCEECYPIAT (61 aa)) adopts an FYVE-type zinc-finger fold. Zn(2+) is bound by residues Cys474, Cys477, Cys490, Cys493, Cys498, Cys501, Cys520, and Cys523.

The protein belongs to the arrestin family.

It localises to the membrane. This is Arrestin domain-containing protein A (adcA) from Dictyostelium discoideum (Social amoeba).